Consider the following 717-residue polypeptide: Myc proto-oncogene protein (717 aa).

Thr217 carries the phosphothreonine modification. At Ser220 the chain carries Phosphoserine. Disordered stretches follow at residues 288 to 376 (LNQH…KNNS), 462 to 535 (TPAS…LKDP), and 555 to 584 (HSSM…SGQD). The span at 298–311 (QQQLNQQQLDEQQQ) shows a compositional bias: low complexity. The span at 351–360 (KSGSNASITT) shows a compositional bias: polar residues. Residues 361–376 (NNNNSNNKNNKLKNNS) are compositionally biased toward low complexity. Polar residues predominate over residues 462-488 (TPASSSPVKSVANSRYPSPSSTPYQNC). The span at 489–523 (SSASPSYSPLSVDSSNVSSSSSSSSSQSSFTTSSS) shows a compositional bias: low complexity. The segment at 625–638 (EKRNQHNDMERQRR) is basic motif. In terms of domain architecture, bHLH spans 625 to 677 (EKRNQHNDMERQRRIGLKNLFEALKKQIPTIRDKERAPKVNILREAAKLCIQL). Residues 639 to 677 (IGLKNLFEALKKQIPTIRDKERAPKVNILREAAKLCIQL) are helix-loop-helix motif.

This sequence belongs to the Myc transcription factor family. In terms of assembly, efficient DNA binding requires dimerization with another bHLH protein. Binds DNA as a heterodimer with Max. Interacts with ago. Interacts with lid. Part of a complex containing lid, Myc and ash2. Component of a complex with pont and rept. Interacts with puf. Interacts with wh/wuho; the interaction may be mediated by mei-P26 and may be involved in the regulation of ribosome biogenesis. Probably targeted for ubiquitination by the SFC ubiquitin ligase complex member ago, leading to its proteasomal degradation. In terms of tissue distribution, low levels detected throughout embryo before cellular blastoderm formation, particularly concentrated in pole plasm. Zygotic expression detected during cellular blastoderm stage in endodermal anlagen of anterior and posterior midgut at both poles. After gastrulation, expression detected in invaginating ventral furrow of mesoderm. Continued expression in anterior and posterior midgut and mesoderm during germband extension. During late germ-band retraction, expression remains detectable in fusing midgut and presumed developing somatic musculature.

It localises to the nucleus. The protein resides in the nucleolus. It is found in the cytoplasm. In terms of biological role, participates in the regulation of gene transcription. Binds DNA in a non-specific manner, yet also specifically recognizes the core sequence CAC[GA]TG. Seems to activate the transcription of growth-related genes; required for cellular proliferation and growth. Functions in the TORC2-mediated regulation of cell growth, acting downstream of the TORC2 complex. Inhibits the demethylase activity of Lid. Activates transcription of mbm. Has a role in ribosome biogenesis and endoreplication in fat body cells by activating the transcription of LTV1. Able to induce the SCF E3 ubiquitin-protein ligase member archipelago (ago) which functions in its degradation. It may therefore create a negative feedback loop with ago that is regulated by the ubiquitin hydrolase puf. In dopaminergic neurons, regulates dopamine levels by binding to the E-box (E1) of the dopamine decarboxylase Ddc promoter and thereby inhibiting its transcription. This regulation is required to suppress male-male courtship. Involved in the acs and insulin signaling mediated non-cell-autonomous induction of amino acid release into the hemolymph following the cytoplasmic purge response to intestinal bacterial infection; required for efficient recovery of enterocyte thickness. This is Myc proto-oncogene protein from Drosophila melanogaster (Fruit fly).